The chain runs to 119 residues: uncharacterized protein (119 aa).

Residues 63–104 (KKIKKELESNSEKRKAALQMIKEEHTAKVDRYKMIIEDLRQQ) are a coiled coil.

This is an uncharacterized protein from Bacillus subtilis (strain 168).